Here is a 257-residue protein sequence, read N- to C-terminus: UPF0246 protein lpl1317 (257 aa).

It belongs to the UPF0246 family.

This Legionella pneumophila (strain Lens) protein is UPF0246 protein lpl1317.